The sequence spans 340 residues: ATP synthase subunit a (340 aa).

The signal sequence occupies residues 1–32 (MKRVNVIQAKAFLKVIALLVPLLLNANGPAFA). Transmembrane regions (helical) follow at residues 107-127 (HVVM…LVGS), 172-192 (LLTV…PYGA), 197-217 (NINV…VAAL), 236-256 (ALWI…PVAL), 269-289 (IVIL…VAVV), and 296-316 (IFIY…FTML).

Belongs to the ATPase A chain family. F-type ATPases have 2 components, CF(1) - the catalytic core - and CF(0) - the membrane proton channel. CF(1) has five subunits: alpha(3), beta(3), gamma(1), delta(1), epsilon(1). CF(0) has four main subunits: a, b, b' and c.

The protein resides in the cell inner membrane. Key component of the proton channel; it plays a direct role in the translocation of protons across the membrane. The sequence is that of ATP synthase subunit a from Pelodictyon phaeoclathratiforme (strain DSM 5477 / BU-1).